We begin with the raw amino-acid sequence, 257 residues long: (R)-2-haloacid dehalogenase (257 aa).

This sequence belongs to the HAD-like hydrolase superfamily. S-2-haloalkanoic acid dehalogenase family.

It carries out the reaction an (R)-2-haloacid + H2O = a (2S)-2-hydroxycarboxylate + a halide anion + H(+). In terms of biological role, catalyzes the hydrolytic dehalogenation of small (R)-2-haloalkanoic acids to yield the corresponding (S)-2-hydroxyalkanoic acids. Acts on acids of short chain lengths, C(2) to C(4), with inversion of configuration at C-2. This is (R)-2-haloacid dehalogenase (dehI) from Rhizobium sp. (strain NHG3).